A 349-amino-acid polypeptide reads, in one-letter code: Ion-translocating oxidoreductase complex subunit D (349 aa).

The next 3 membrane-spanning stretches (helical) occupy residues 37–57, 73–90, and 124–144; these read AFFG…ALSA, LSDN…VAIP, and AMAA…TWIA. Thr-185 bears the FMN phosphoryl threonine mark. The next 5 membrane-spanning stretches (helical) occupy residues 212–232, 239–259, 265–285, 291–311, and 315–335; these read ATGV…LVLL, WHIS…GFLL, GSPL…FIAT, ATSP…VYII, and GGYP…APFI.

It belongs to the NqrB/RnfD family. The complex is composed of six subunits: RnfA, RnfB, RnfC, RnfD, RnfE and RnfG. FMN serves as cofactor.

It is found in the cell inner membrane. Its function is as follows. Part of a membrane-bound complex that couples electron transfer with translocation of ions across the membrane. The polypeptide is Ion-translocating oxidoreductase complex subunit D (Shewanella sp. (strain W3-18-1)).